We begin with the raw amino-acid sequence, 215 residues long: Cytochrome b6 (215 aa).

Residues Ile-32–Phe-52 form a helical membrane-spanning segment. Cys-35 lines the heme c pocket. Heme b is bound by residues His-86 and His-100. 3 consecutive transmembrane segments (helical) span residues Ala-90 to Phe-110, Leu-116 to Tyr-136, and Leu-186 to Ile-206. His-187 and His-202 together coordinate heme b.

Belongs to the cytochrome b family. PetB subfamily. As to quaternary structure, the 4 large subunits of the cytochrome b6-f complex are cytochrome b6, subunit IV (17 kDa polypeptide, PetD), cytochrome f and the Rieske protein, while the 4 small subunits are PetG, PetL, PetM and PetN. The complex functions as a dimer. Heme b is required as a cofactor. It depends on heme c as a cofactor.

It is found in the plastid. The protein localises to the chloroplast thylakoid membrane. In terms of biological role, component of the cytochrome b6-f complex, which mediates electron transfer between photosystem II (PSII) and photosystem I (PSI), cyclic electron flow around PSI, and state transitions. The polypeptide is Cytochrome b6 (Piper cenocladum (Ant piper)).